Here is a 449-residue protein sequence, read N- to C-terminus: Phosphoglucosamine mutase (449 aa).

The Phosphoserine intermediate role is filled by Ser-104. Positions 104, 243, 245, and 247 each coordinate Mg(2+). Ser-104 bears the Phosphoserine mark.

It belongs to the phosphohexose mutase family. The cofactor is Mg(2+). Activated by phosphorylation.

The enzyme catalyses alpha-D-glucosamine 1-phosphate = D-glucosamine 6-phosphate. In terms of biological role, catalyzes the conversion of glucosamine-6-phosphate to glucosamine-1-phosphate. In Xanthomonas campestris pv. campestris (strain 8004), this protein is Phosphoglucosamine mutase.